A 192-amino-acid polypeptide reads, in one-letter code: Imidazoleglycerol-phosphate dehydratase (192 aa).

The protein belongs to the imidazoleglycerol-phosphate dehydratase family.

It localises to the cytoplasm. The catalysed reaction is D-erythro-1-(imidazol-4-yl)glycerol 3-phosphate = 3-(imidazol-4-yl)-2-oxopropyl phosphate + H2O. It participates in amino-acid biosynthesis; L-histidine biosynthesis; L-histidine from 5-phospho-alpha-D-ribose 1-diphosphate: step 6/9. This is Imidazoleglycerol-phosphate dehydratase from Methanocella arvoryzae (strain DSM 22066 / NBRC 105507 / MRE50).